The primary structure comprises 358 residues: 4-hydroxy-3-methylbut-2-en-1-yl diphosphate synthase (flavodoxin) (358 aa).

The [4Fe-4S] cluster site is built by cysteine 265, cysteine 268, cysteine 300, and glutamate 307.

The protein belongs to the IspG family. Requires [4Fe-4S] cluster as cofactor.

The enzyme catalyses (2E)-4-hydroxy-3-methylbut-2-enyl diphosphate + oxidized [flavodoxin] + H2O + 2 H(+) = 2-C-methyl-D-erythritol 2,4-cyclic diphosphate + reduced [flavodoxin]. It participates in isoprenoid biosynthesis; isopentenyl diphosphate biosynthesis via DXP pathway; isopentenyl diphosphate from 1-deoxy-D-xylulose 5-phosphate: step 5/6. Functionally, converts 2C-methyl-D-erythritol 2,4-cyclodiphosphate (ME-2,4cPP) into 1-hydroxy-2-methyl-2-(E)-butenyl 4-diphosphate. This is 4-hydroxy-3-methylbut-2-en-1-yl diphosphate synthase (flavodoxin) from Maridesulfovibrio salexigens (strain ATCC 14822 / DSM 2638 / NCIMB 8403 / VKM B-1763) (Desulfovibrio salexigens).